Consider the following 564-residue polypeptide: Solute carrier family 22 member 21 (564 aa).

The Cytoplasmic segment spans residues 1-20; that stretch reads MLDYDEVTAFLGEWGTFQRL. A helical transmembrane segment spans residues 21–41; the sequence is IFFLLSASIIPNGFTGLSAVF. At 42–142 the chain is on the extracellular side; sequence LTAIPEHRCR…DLVCKDDWKA (101 aa). N-linked (GlcNAc...) asparagine glycans are attached at residues Asn-57, Asn-64, and Asn-91. The helical transmembrane segment at 143-163 threads the bilayer; that stretch reads PLTTSFFYVGVLLGSFISGQL. Topologically, residues 164-172 are cytoplasmic; sequence SDRFGRKNI. Residues 173–193 form a helical membrane-spanning segment; the sequence is LFLTMAMHTGFSFIQVFSVNF. Residues 194–197 are Extracellular-facing; sequence EMFT. Residues 198–218 form a helical membrane-spanning segment; it reads LLYTLVGMGHISNYVAAFVLG. Residue 218-225 coordinates ATP; it reads GTEMLSKS. Residues 219-232 lie on the Cytoplasmic side of the membrane; the sequence is TEMLSKSVRIIFAT. The helical transmembrane segment at 233-253 threads the bilayer; that stretch reads LGVCIFFAFGFMVLPLFAYFI. Over 254–257 the chain is Extracellular; that stretch reads REWR. Residues 258 to 278 form a helical membrane-spanning segment; that stretch reads RLLLAITLPGVLCGALWWFIP. At 279–344 the chain is on the cytoplasmic side; it reads ESPRWLISQG…YDLVRTPNIR (66 aa). The helical transmembrane segment at 345–365 threads the bilayer; that stretch reads ILTIMSIILWLTISVGYFGLS. The Extracellular segment spans residues 366-376; the sequence is LDTPNLNGNIY. The chain crosses the membrane as a helical span at residues 377–397; the sequence is VNCFLLAAVEVPAYVLAWLLL. The Cytoplasmic segment spans residues 398–409; that stretch reads QHVSRRYSMAGS. The helical transmembrane segment at 410–430 threads the bilayer; the sequence is LFLGGSVLLLVQLVPSDLHYL. Residues 431-433 are Extracellular-facing; sequence STT. A helical transmembrane segment spans residues 434 to 454; that stretch reads LVMVGKFGITSAYSMVYVYTA. Residues 455 to 465 are Cytoplasmic-facing; sequence ELYPTVVRNMG. A helical membrane pass occupies residues 466-486; it reads VGVSSTASRLGSILSPYFVYL. Topologically, residues 487 to 491 are extracellular; sequence GAYDR. A helical membrane pass occupies residues 492 to 512; it reads RLPYILMGSLTILTAIITLFF. Residues 513–564 lie on the Cytoplasmic side of the membrane; the sequence is PESSGVSLPETIDEMQKVKKLKQRQSLSKKGSPKESKGNVSRTSRTSEPKGF. The segment at 532 to 564 is disordered; it reads KLKQRQSLSKKGSPKESKGNVSRTSRTSEPKGF.

This sequence belongs to the major facilitator (TC 2.A.1) superfamily. Organic cation transporter (TC 2.A.1.19) family. Predominantly expressed in testis.

The protein resides in the peroxisome membrane. Sodium-ion independent, medium affinity carnitine transporter. Also transports organic cations such as tetraethylammonium (TEA) without the involvement of sodium. Relative uptake activity ratio of carnitine to TEA is 746. This chain is Solute carrier family 22 member 21 (Slc22a21), found in Mus musculus (Mouse).